Reading from the N-terminus, the 235-residue chain is MAKSDIETGGGNELYPGMKESSELRWAFIRKLYSILSLQLLVTVGVSAVVYFVRPIPEFITETHRGLAVFFVILLLPLLLLWPLLAFEKKHPINCIVLSIFTLSISFSVGICCSLSQGRIVLEAAILTAVMVFGLTIYTFWAVKRGHDFSFLGPFLFGALLIILVFTLLQIFHPLGKLSSMIFSGIASIVFCGYIIFDTNQLIKKLNYDEYITAAIRLYLDVMNLFLSLLGIISN.

Helical transmembrane passes span 33-53 (YSIL…VYFV), 67-87 (LAVF…LLAF), 95-115 (CIVL…CCSL), 120-140 (IVLE…IYTF), 149-169 (FSFL…FTLL), 178-198 (LSSM…IIFD), and 212-232 (ITAA…LLGI).

The protein belongs to the BI1 family. In terms of tissue distribution, expressed at very low in leaves.

Its subcellular location is the membrane. In terms of biological role, (Microbial infection) Facilitates the development of the powdery mildew fungus E.cruciferarum. (Microbial infection) May prevent cell death upon A.alternata f.sp. lycopersici (AAL) toxin treatment. The polypeptide is Protein LIFEGUARD 1 (Arabidopsis thaliana (Mouse-ear cress)).